The following is a 179-amino-acid chain: Cytochrome b6-f complex iron-sulfur subunit 1 (179 aa).

A helical membrane pass occupies residues 21–43; it reads LLTFGTVTGVALGALYPVVNYFI. The region spanning 61–162 is the Rieske domain; it reads GNDVSVSKFL…AKTENDKIVL (102 aa). Residues cysteine 108, histidine 110, cysteine 126, and histidine 129 each contribute to the [2Fe-2S] cluster site. A disulfide bridge links cysteine 113 with cysteine 128.

The protein belongs to the Rieske iron-sulfur protein family. The 4 large subunits of the cytochrome b6-f complex are cytochrome b6, subunit IV (17 kDa polypeptide, PetD), cytochrome f and the Rieske protein, while the 4 small subunits are PetG, PetL, PetM and PetN. The complex functions as a dimer. It depends on [2Fe-2S] cluster as a cofactor.

The protein localises to the cellular thylakoid membrane. It carries out the reaction 2 oxidized [plastocyanin] + a plastoquinol + 2 H(+)(in) = 2 reduced [plastocyanin] + a plastoquinone + 4 H(+)(out). Its function is as follows. Component of the cytochrome b6-f complex, which mediates electron transfer between photosystem II (PSII) and photosystem I (PSI), cyclic electron flow around PSI, and state transitions. The protein is Cytochrome b6-f complex iron-sulfur subunit 1 of Nostoc sp. (strain PCC 7120 / SAG 25.82 / UTEX 2576).